Reading from the N-terminus, the 537-residue chain is Cytochrome P450 4F6 (537 aa).

Cys-468 provides a ligand contact to heme.

It belongs to the cytochrome P450 family. Heme is required as a cofactor. As to expression, high expression in liver and kidney. Lower expression in brain.

It is found in the endoplasmic reticulum membrane. The protein localises to the microsome membrane. The enzyme catalyses an organic molecule + reduced [NADPH--hemoprotein reductase] + O2 = an alcohol + oxidized [NADPH--hemoprotein reductase] + H2O + H(+). The sequence is that of Cytochrome P450 4F6 (Cyp4f6) from Rattus norvegicus (Rat).